A 283-amino-acid chain; its full sequence is 4-diphosphocytidyl-2-C-methyl-D-erythritol kinase (283 aa).

The active site involves lysine 10. 99-109 (PMGGGLGGGSS) lines the ATP pocket. Aspartate 141 is an active-site residue.

It belongs to the GHMP kinase family. IspE subfamily. In terms of assembly, homodimer.

It carries out the reaction 4-CDP-2-C-methyl-D-erythritol + ATP = 4-CDP-2-C-methyl-D-erythritol 2-phosphate + ADP + H(+). The protein operates within isoprenoid biosynthesis; isopentenyl diphosphate biosynthesis via DXP pathway; isopentenyl diphosphate from 1-deoxy-D-xylulose 5-phosphate: step 3/6. Catalyzes the phosphorylation of the position 2 hydroxy group of 4-diphosphocytidyl-2C-methyl-D-erythritol. The protein is 4-diphosphocytidyl-2-C-methyl-D-erythritol kinase of Escherichia coli O157:H7 (strain EC4115 / EHEC).